The primary structure comprises 470 residues: STAADAEEKLMNHLLSPDRYNKLIRPAVNSSQLVSIELQVSLAQLISVNEREQIMTTNVWLNQEWIDYRLAWKPSDYEGINMLRIPAKHIWLPDIVLYNNADGTYEVSLYTNAIVQNNGSIRWLPPAIYKSACKIEVKHFPFDQQNCTLKFRSWTYDHTEIDMVLKTSMASMDDFTPSGEWDIVALPGRRTENPLDPNYVDVTYDFIIKRKPLFYTINLIIPCVLITSLAILVFYLPSDCGEKMTLCISVLLALTVFLLLISKIVPPTSLDVPLIGKYLMFTMVLVTFSIVTSVCVLNVHHRSPSTHTMPPWVKLVFLERLPAYLFMKRPENNSPRQKPANCKKTRAENLCMDPADFYKNSTYFVNTASAKKYDMKITDTLDNVSSHQDFRLRTGTKFSPEVQEAIDGVSFIAEHMKSDDNDQSVIEDWKYVAMVVDRLFLWIFVLVCVLGTVGLFLQPLFQNHIAATNP.

Positions 1-3 (STA) are cleaved as a signal peptide. The Extracellular segment spans residues 4 to 216 (ADAEEKLMNH…IIKRKPLFYT (213 aa)). Residues Asn-29, Asn-118, and Asn-146 are each glycosylated (N-linked (GlcNAc...) asparagine). Residues Cys-133 and Cys-147 are joined by a disulfide bond. The chain crosses the membrane as a helical span at residues 217 to 237 (INLIIPCVLITSLAILVFYLP). The Cytoplasmic segment spans residues 238-245 (SDCGEKMT). Glu-242 contributes to the Na(+) binding site. A helical membrane pass occupies residues 246–266 (LCISVLLALTVFLLLISKIVP). The Extracellular segment spans residues 267–278 (PTSLDVPLIGKY). Residues 279–299 (LMFTMVLVTFSIVTSVCVLNV) form a helical membrane-spanning segment. Residues 300–438 (HHRSPSTHTM…WKYVAMVVDR (139 aa)) are Cytoplasmic-facing. A helical transmembrane segment spans residues 439–459 (LFLWIFVLVCVLGTVGLFLQP). The Extracellular portion of the chain corresponds to 460-470 (LFQNHIAATNP).

The protein belongs to the ligand-gated ion channel (TC 1.A.9) family. Acetylcholine receptor (TC 1.A.9.1) subfamily. Beta-4/CHRNB4 sub-subfamily. As to quaternary structure, neuronal AChR is composed of two different types of subunits: alpha and beta. CHRNB4/Beta-4 subunit can be combined to CHRNA2/alpha-2, CHRNA3/alpha-3 or CHRNA4/alpha-4, CHRNA5/alpha-5 and CHRNB3/beta-3 to give rise to functional receptors.

The protein localises to the synaptic cell membrane. Its subcellular location is the cell membrane. The enzyme catalyses Ca(2+)(in) = Ca(2+)(out). It catalyses the reaction K(+)(in) = K(+)(out). The catalysed reaction is Na(+)(in) = Na(+)(out). Activated by a myriad of ligands such as acetylcholine, cytisine, nicotine, choline and epibatidine. The heteropentamer CHRNA3:CHRNB4 activity is blocked by the alpha-conotoxin ImI and AuIB. Its function is as follows. Component of neuronal acetylcholine receptors (nAChRs) that function as pentameric, ligand-gated cation channels with high calcium permeability among other activities. nAChRs are excitatory neurotrasnmitter receptors formed by a collection of nAChR subunits known to mediate synaptic transmission in the nervous system and the neuromuscular junction. Each nAchR subunit confers differential attributes to channel properties, including activation, deactivation and desensitization kinetics, pH sensitivity, cation permeability, and binding to allosteric modulators. CHRNB4 forms heteropentameric neuronal acetylcholine receptors with CHRNA2, CHRNA3 and CHRNA4, as well as CHRNA5 and CHRNB3 as accesory subunits. CHRNA3:CHRNB4 being predominant in neurons of the autonomic ganglia, it is known as ganglionic nicotinic receptor. CHRNA3:CHRNB4 or CHRNA3:CHRNA5:CHRNB4 play also an important role in the habenulo-interpeduncular tract, modulating the mesolimbic dopamine system and affecting reward circuits and addiction. Hypothalamic CHRNA3:CHRNB4 nAChR activation by nicotine leads to activation of POMC neurons and a decrease in food intake. This Gallus gallus (Chicken) protein is Neuronal acetylcholine receptor subunit beta-4 (CHRNB4).